A 635-amino-acid polypeptide reads, in one-letter code: Sodium- and chloride-dependent creatine transporter 1 (635 aa).

Polar residues predominate over residues 1 to 11 (MANKSTENGIY). The disordered stretch occupies residues 1-27 (MANKSTENGIYSVSGEEKKGPLIAPGP). At 1–60 (MANKSTENGIYSVSGEEKKGPLIAPGPDGAPAKGDGPAALGAPGSLLAVPPRETWTRQMD) the chain is on the cytoplasmic side. A helical transmembrane segment spans residues 61–81 (FIMSCVGFAVGLGNVWRFPYL). Over 82 to 87 (CYKNGG) the chain is Extracellular. The helical transmembrane segment at 88–108 (GVFLIPYILIALIGGIPIFFL) threads the bilayer. Residues 109-138 (EISLGQFMKAGSINVWNICPLFKGLGYASM) are Cytoplasmic-facing. The helical transmembrane segment at 139 to 159 (VIVFYCNTYYIMVLAWGFYYL) threads the bilayer. Residues 160 to 230 (VKSFTTTLPW…LSEGLEVPGA (71 aa)) are Extracellular-facing. 2 N-linked (GlcNAc...) asparagine glycosylation sites follow: asparagine 192 and asparagine 197. A helical transmembrane segment spans residues 231–251 (LNWEVTLCLLTCWVLVYFCVW). Over 252-269 (KGVKSTGKIVYFTATFPY) the chain is Cytoplasmic. The chain crosses the membrane as a helical span at residues 270–290 (VVLVVLLVRGVLLPGALDGII). The Extracellular segment spans residues 291–304 (YYLKPDWSKLASPQ). The helical transmembrane segment at 305–325 (VWIDAGTQIFFSYAIGLGALT) threads the bilayer. Residues 326–341 (ALGSYNRFNNNCYKDA) lie on the Cytoplasmic side of the membrane. The helical transmembrane segment at 342-362 (IILALINSGTSFFAGFVVFSI) threads the bilayer. Over 363 to 394 (LGFMATEQGVHISKVAESGPGLAFIAYPRAVT) the chain is Extracellular. The chain crosses the membrane as a helical span at residues 395 to 415 (LMPVAPLWAALFFFMLLLLGL). Topologically, residues 416–444 (DSQFVGVEGFITGLLDLLPASYYFRFQRE) are cytoplasmic. Residues 445-465 (ISVALCCTICFVIDLSMVTDG) form a helical membrane-spanning segment. The Extracellular segment spans residues 466-479 (GMYVFQLFDYYSAS). Residues 480–500 (GTTLLWQAFWECVVVAWVYGA) traverse the membrane as a helical segment. At 501–520 (DRFMDDVACMIGYRPCPWMK) the chain is on the cytoplasmic side. A helical transmembrane segment spans residues 521 to 541 (WCWSFFTPLVCMGIFIFNVVY). Over 542-560 (HEPLVYNNTYVYPWWGEAV) the chain is Extracellular. N-linked (GlcNAc...) asparagine glycosylation is present at asparagine 548. Residues 561-581 (GWAFALSSMLCVPLHLLGCLL) form a helical membrane-spanning segment. The Cytoplasmic portion of the chain corresponds to 582-635 (RAKGTMAERWQHLTQPIWGLHHLEYRAQDSDVRGLTTLTPVSESSKVVVVESVM). Phosphothreonine occurs at positions 617 and 620. Serine 623 is modified (phosphoserine).

This sequence belongs to the sodium:neurotransmitter symporter (SNF) (TC 2.A.22) family. SLC6A8 subfamily. Post-translationally, glycosylated.

It is found in the cell membrane. The protein resides in the apical cell membrane. The enzyme catalyses creatine(out) + chloride(out) + 2 Na(+)(out) = creatine(in) + chloride(in) + 2 Na(+)(in). In terms of biological role, creatine:sodium symporter which mediates the uptake of creatine. Plays an important role in supplying creatine to the brain via the blood-brain barrier. The sequence is that of Sodium- and chloride-dependent creatine transporter 1 (SLC6A8) from Bos taurus (Bovine).